Reading from the N-terminus, the 217-residue chain is Non-structural protein NS3 (217 aa).

Belongs to the orbivirus NS3 family.

May play a role in the release of virions from infected cells. In Camelus dromedarius (Dromedary), this protein is Non-structural protein NS3 (Segment-10).